An 87-amino-acid chain; its full sequence is Small ribosomal subunit protein bS20 (87 aa).

The protein belongs to the bacterial ribosomal protein bS20 family.

Functionally, binds directly to 16S ribosomal RNA. This chain is Small ribosomal subunit protein bS20, found in Nitrosomonas europaea (strain ATCC 19718 / CIP 103999 / KCTC 2705 / NBRC 14298).